Here is a 366-residue protein sequence, read N- to C-terminus: GTPase Obg (366 aa).

The Obg domain maps to 1-161 (MRFVDEARIQ…FNLRLELKIL (161 aa)). Residues 121–148 (SGGRGGKGNEHFKSSTMRAPRFSQPGEP) form a disordered region. Residues 162–334 (ADAGLIGLPN…LVQELWQVCE (173 aa)) form the OBG-type G domain. Residues 168–175 (GLPNAGKS), 193–197 (FTTLT), 217–220 (DIPG), 287–290 (NKID), and 315–317 (SAR) each bind GTP. Mg(2+) is bound by residues Ser-175 and Thr-195.

It belongs to the TRAFAC class OBG-HflX-like GTPase superfamily. OBG GTPase family. As to quaternary structure, monomer. Requires Mg(2+) as cofactor.

The protein resides in the cytoplasm. Its function is as follows. An essential GTPase which binds GTP, GDP and possibly (p)ppGpp with moderate affinity, with high nucleotide exchange rates and a fairly low GTP hydrolysis rate. Plays a role in control of the cell cycle, stress response, ribosome biogenesis and in those bacteria that undergo differentiation, in morphogenesis control. The polypeptide is GTPase Obg (Desulfovibrio desulfuricans (strain ATCC 27774 / DSM 6949 / MB)).